The primary structure comprises 165 residues: Basic transcription factor 3 (165 aa).

Residues 33 to 97 (TTDDKRLQST…PQTKKLQDIL (65 aa)) enclose the NAC-A/B domain. Polar residues predominate over residues 120-134 (QKQASGEGNAASATI). The disordered stretch occupies residues 120–144 (QKQASGEGNAASATIQEEDDDDVPE).

The protein belongs to the NAC-beta family. As to quaternary structure, part of the nascent polypeptide-associated complex (NAC). Interacts with EIF(ISO)4E.

In Arabidopsis thaliana (Mouse-ear cress), this protein is Basic transcription factor 3.